Reading from the N-terminus, the 450-residue chain is Molybdate-anion transporter (450 aa).

12 helical membrane-spanning segments follow: residues 1 to 21 (MLVT…GLEL), 43 to 63 (LDFY…APYL), 79 to 99 (ILYV…SSLV), 128 to 148 (FVLL…FSAF), 174 to 194 (AAFW…AVAS), 195 to 215 (WIGL…ALAG), 249 to 269 (VLLL…FVFL), 278 to 298 (GAPL…GSSL), 311 to 331 (PMHL…MLTF), 344 to 364 (FIAF…MSFL), 376 to 396 (GVLN…LLVL), and 409 to 429 (FSIC…LFTV).

The protein belongs to the major facilitator superfamily. Expressed ubiquitously but at relatively higher levels in the olfactory bulb and the skeletal muscle.

The protein resides in the cell membrane. Mediates high-affinity intracellular uptake of the rare oligo-element molybdenum. The protein is Molybdate-anion transporter (MFSD5) of Homo sapiens (Human).